The chain runs to 54 residues: Ovomucoid (54 aa).

A Kazal-like domain is found at 4-54 (VDCSDYPRPDCTLEYMPLCGSDNKTYGNKCNFCNAVVDSNGTLTLSHFGKC). Intrachain disulfides connect Cys6/Cys36, Cys14/Cys33, and Cys22/Cys54. N-linked (GlcNAc...) asparagine glycosylation occurs at Asn43.

The protein resides in the secreted. The chain is Ovomucoid from Dendrocygna eytoni (Plumed whistling-duck).